The chain runs to 65 residues: Large ribosomal subunit protein bL35 (65 aa).

Belongs to the bacterial ribosomal protein bL35 family.

The protein is Large ribosomal subunit protein bL35 of Yersinia pseudotuberculosis serotype O:1b (strain IP 31758).